A 1792-amino-acid chain; its full sequence is D-lysergyl-peptide-synthetase subunit 3 (1792 aa).

The interval 239 to 642 is adenylation (A) domain; sequence FRQRCDLHPN…GRKDSQIKIR (404 aa). The region spanning 779-853 is the Carrier domain; it reads SNEEHRLQRM…DLARKASQSV (75 aa). S813 is modified (O-(pantetheine 4'-phosphoryl)serine). The segment at 895 to 1285 is condensation (C) domain; it reads EDIYPCTPMQ…HILGQIHGKE (391 aa). Residues 1415–1640 form a reductase (R) domain region; that stretch reads VTGANGFIGT…AGEFNSSAGS (226 aa).

The protein belongs to the NRP synthetase family.

It participates in alkaloid biosynthesis; ergot alkaloid biosynthesis. D-lysergyl-peptide-synthetase subunit 3; part of the gene cluster that mediates the biosynthesis of fungal ergot alkaloid. DmaW catalyzes the first step of ergot alkaloid biosynthesis by condensing dimethylallyl diphosphate (DMAP) and tryptophan to form 4-dimethylallyl-L-tryptophan. The second step is catalyzed by the methyltransferase easF that methylates 4-dimethylallyl-L-tryptophan in the presence of S-adenosyl-L-methionine, resulting in the formation of 4-dimethylallyl-L-abrine. The catalase easC and the FAD-dependent oxidoreductase easE then transform 4-dimethylallyl-L-abrine to chanoclavine-I which is further oxidized by easD in the presence of NAD(+), resulting in the formation of chanoclavine-I aldehyde. Agroclavine dehydrogenase easG then mediates the conversion of chanoclavine-I aldehyde to agroclavine via a non-enzymatic adduct reaction: the substrate is an iminium intermediate that is formed spontaneously from chanoclavine-I aldehyde in the presence of glutathione. The presence of easA is not required to complete this reaction. Further conversion of agroclavine to paspalic acid is a two-step process involving oxidation of agroclavine to elymoclavine and of elymoclavine to paspalic acid, the second step being performed by the elymoclavine oxidase cloA. Paspalic acid is then further converted to D-lysergic acid. Ergopeptines are assembled from D-lysergic acid and three different amino acids by the D-lysergyl-peptide-synthetases composed each of a monomudular and a trimodular nonribosomal peptide synthetase subunit. LpsB and lpsC encode the monomodular subunits responsible for D-lysergic acid activation and incorporation into the ergopeptine backbone. LpsA1 and A2 subunits encode the trimodular nonribosomal peptide synthetase assembling the tripeptide portion of ergopeptines. LpsA1 is responsible for formation of the major ergopeptine, ergotamine, and lpsA2 for alpha-ergocryptine, the minor ergopeptine of the total alkaloid mixture elaborated by C.purpurea. D-lysergyl-tripeptides are assembled by the nonribosomal peptide synthetases and released as N-(D-lysergyl-aminoacyl)-lactams. Cyclolization of the D-lysergyl-tripeptides is performed by the Fe(2+)/2-ketoglutarate-dependent dioxygenase easH which introduces a hydroxyl group into N-(D-lysergyl-aminoacyl)-lactam at alpha-C of the aminoacyl residue followed by spontaneous condensation with the terminal lactam carbonyl group. This is D-lysergyl-peptide-synthetase subunit 3 from Claviceps purpurea (strain 20.1) (Ergot fungus).